We begin with the raw amino-acid sequence, 689 residues long: Methionine--tRNA ligase (689 aa).

Positions 15–25 (PYANGPIHLGH) match the 'HIGH' region motif. Zn(2+)-binding residues include Cys-146, Cys-149, Cys-159, and Cys-162. The short motif at 332-336 (KMSKS) is the 'KMSKS' region element. Lys-335 is an ATP binding site. Positions 588–689 (DFAKIDLRIA…EGAQPGMRVK (102 aa)) constitute a tRNA-binding domain.

This sequence belongs to the class-I aminoacyl-tRNA synthetase family. MetG type 1 subfamily. Homodimer. It depends on Zn(2+) as a cofactor.

The protein localises to the cytoplasm. The catalysed reaction is tRNA(Met) + L-methionine + ATP = L-methionyl-tRNA(Met) + AMP + diphosphate. Is required not only for elongation of protein synthesis but also for the initiation of all mRNA translation through initiator tRNA(fMet) aminoacylation. The sequence is that of Methionine--tRNA ligase from Shewanella baltica (strain OS155 / ATCC BAA-1091).